Consider the following 602-residue polypeptide: ATP-dependent lipid A-core flippase 1 (602 aa).

A run of 5 helical transmembrane segments spans residues 36-56 (LGFV…VYFL), 80-100 (LFII…NYCL), 154-174 (ILTI…MFYY), 176-196 (WQLS…VSVV), and 261-281 (ASVP…FYAI). Residues 39-321 (VAAIIGMLGY…LTNVNSEFQQ (283 aa)) form the ABC transmembrane type-1 domain. In terms of domain architecture, ABC transporter spans 362 to 599 (YKNTNTMTTS…QGAYAQLHSF (238 aa)). Residue 398-405 (GRSGSGKS) coordinates ATP.

The protein belongs to the ABC transporter superfamily. Lipid exporter (TC 3.A.1.106) family. Homodimer.

It is found in the cell inner membrane. It catalyses the reaction ATP + H2O + lipid A-core oligosaccharideSide 1 = ADP + phosphate + lipid A-core oligosaccharideSide 2.. In terms of biological role, involved in lipopolysaccharide (LPS) biosynthesis. Translocates lipid A-core from the inner to the outer leaflet of the inner membrane. Transmembrane domains (TMD) form a pore in the inner membrane and the ATP-binding domain (NBD) is responsible for energy generation. The polypeptide is ATP-dependent lipid A-core flippase 1 (Colwellia psychrerythraea (strain 34H / ATCC BAA-681) (Vibrio psychroerythus)).